The sequence spans 196 residues: Large ribosomal subunit protein bL25 (196 aa).

It belongs to the bacterial ribosomal protein bL25 family. CTC subfamily. Part of the 50S ribosomal subunit; part of the 5S rRNA/L5/L18/L25 subcomplex. Contacts the 5S rRNA. Binds to the 5S rRNA independently of L5 and L18.

Its function is as follows. This is one of the proteins that binds to the 5S RNA in the ribosome where it forms part of the central protuberance. This is Large ribosomal subunit protein bL25 from Bacteroides thetaiotaomicron (strain ATCC 29148 / DSM 2079 / JCM 5827 / CCUG 10774 / NCTC 10582 / VPI-5482 / E50).